The sequence spans 206 residues: Small ribosomal subunit protein uS4 (206 aa).

Residues 96 to 161 (RRLDNVVYRM…QGRIQAALAL (66 aa)) form the S4 RNA-binding domain.

It belongs to the universal ribosomal protein uS4 family. In terms of assembly, part of the 30S ribosomal subunit. Contacts protein S5. The interaction surface between S4 and S5 is involved in control of translational fidelity.

Its function is as follows. One of the primary rRNA binding proteins, it binds directly to 16S rRNA where it nucleates assembly of the body of the 30S subunit. In terms of biological role, with S5 and S12 plays an important role in translational accuracy. This Legionella pneumophila (strain Corby) protein is Small ribosomal subunit protein uS4.